The primary structure comprises 457 residues: Argininosuccinate lyase (457 aa).

Belongs to the lyase 1 family. Argininosuccinate lyase subfamily.

The protein localises to the cytoplasm. It catalyses the reaction 2-(N(omega)-L-arginino)succinate = fumarate + L-arginine. Its pathway is amino-acid biosynthesis; L-arginine biosynthesis; L-arginine from L-ornithine and carbamoyl phosphate: step 3/3. The sequence is that of Argininosuccinate lyase from Salmonella arizonae (strain ATCC BAA-731 / CDC346-86 / RSK2980).